Reading from the N-terminus, the 1755-residue chain is Transposon Ty1-JR2 Gag-Pol polyprotein (1755 aa).

Positions 1–16 (MESQQLSQHSHISHGS) are enriched in low complexity. 3 disordered regions span residues 1 to 93 (MESQ…MMTQ), 126 to 173 (PQSQ…RPPP), and 352 to 421 (GSRN…SKST). 3 stretches are compositionally biased toward polar residues: residues 48 to 60 (TKAN…TPAS), 71 to 93 (SPQT…MMTQ), and 127 to 152 (QSQF…GNTF). Residues 153 to 165 (TDSSSADSDMTST) show a composition bias toward low complexity. The segment at 299 to 401 (NNGIHINNKV…NSKSKTARAH (103 aa)) is RNA-binding. Residues 402–418 (NVSTSNNSPSTDNDSIS) show a composition bias toward low complexity. The residue at position 416 (Ser416) is a Phosphoserine. Catalysis depends on Asp461, which acts as the For protease activity; shared with dimeric partner. The segment at 583-640 (NVHTSESTRKYPYPFIHRMLAHANAQTIRYSLKNNTITYFNESDVDWSSAIDYQCPDC) is integrase-type zinc finger-like. In terms of domain architecture, Integrase catalytic spans 660–835 (NSYEPFQYLH…AGLDISTLLP (176 aa)). Residues Asp671 and Asp736 each coordinate Mg(2+). Disordered stretches follow at residues 956–1087 (SKAV…ETEK), 1092–1111 (RSPS…NIVP), and 1130–1186 (DLPL…EDNE). A compositionally biased stretch (low complexity) spans 960 to 969 (SPTDSTPPST). The segment covering 1005-1015 (STPQISNIEST) has biased composition (polar residues). Residues 1038 to 1053 (ESSHASKSKDFRHSDS) are compositionally biased toward basic and acidic residues. Composition is skewed to polar residues over residues 1054-1082 (YSEN…QISD) and 1101-1111 (PENNSSHNIVP). The Bipartite nuclear localization signal signature appears at 1178 to 1212 (KKRSLEDNETEIKVSRDTWNTKNMRSLEPPRSKKR). One can recognise a Reverse transcriptase Ty1/copia-type domain in the interval 1338 to 1476 (NNYYITQLDI…DILGLEIKYQ (139 aa)). Mg(2+)-binding residues include Asp1346, Asp1427, Asp1428, Asp1610, Glu1652, and Asp1685. An RNase H Ty1/copia-type domain is found at 1610-1752 (DASYGNQPYY…IKTFKLLTNK (143 aa)).

The capsid protein forms a homotrimer, from which the VLPs are assembled. The protease is a homodimer, whose active site consists of two apposed aspartic acid residues. Initially, virus-like particles (VLPs) are composed of the structural unprocessed proteins Gag and Gag-Pol, and also contain the host initiator methionine tRNA (tRNA(i)-Met) which serves as a primer for minus-strand DNA synthesis, and a dimer of genomic Ty RNA. Processing of the polyproteins occurs within the particle and proceeds by an ordered pathway, called maturation. First, the protease (PR) is released by autocatalytic cleavage of the Gag-Pol polyprotein yielding capsid protein p45 and a Pol-p154 precursor protein. This cleavage is a prerequisite for subsequent processing of Pol-p154 at the remaining sites to release the mature structural and catalytic proteins. Maturation takes place prior to the RT reaction and is required to produce transposition-competent VLPs.

Its subcellular location is the cytoplasm. It is found in the nucleus. It carries out the reaction DNA(n) + a 2'-deoxyribonucleoside 5'-triphosphate = DNA(n+1) + diphosphate. It catalyses the reaction Endonucleolytic cleavage to 5'-phosphomonoester.. Capsid protein (CA) is the structural component of the virus-like particle (VLP), forming the shell that encapsulates the retrotransposons dimeric RNA genome. The particles are assembled from trimer-clustered units and there are holes in the capsid shells that allow for the diffusion of macromolecules. CA also has nucleocapsid-like chaperone activity, promoting primer tRNA(i)-Met annealing to the multipartite primer-binding site (PBS), dimerization of Ty1 RNA and initiation of reverse transcription. Functionally, the aspartyl protease (PR) mediates the proteolytic cleavages of the Gag and Gag-Pol polyproteins after assembly of the VLP. In terms of biological role, reverse transcriptase/ribonuclease H (RT) is a multifunctional enzyme that catalyzes the conversion of the retro-elements RNA genome into dsDNA within the VLP. The enzyme displays a DNA polymerase activity that can copy either DNA or RNA templates, and a ribonuclease H (RNase H) activity that cleaves the RNA strand of RNA-DNA heteroduplexes during plus-strand synthesis and hydrolyzes RNA primers. The conversion leads to a linear dsDNA copy of the retrotransposon that includes long terminal repeats (LTRs) at both ends. Its function is as follows. Integrase (IN) targets the VLP to the nucleus, where a subparticle preintegration complex (PIC) containing at least integrase and the newly synthesized dsDNA copy of the retrotransposon must transit the nuclear membrane. Once in the nucleus, integrase performs the integration of the dsDNA into the host genome. The protein is Transposon Ty1-JR2 Gag-Pol polyprotein (TY1B-JR2) of Saccharomyces cerevisiae (strain ATCC 204508 / S288c) (Baker's yeast).